We begin with the raw amino-acid sequence, 126 residues long: Anti-adapter protein IraD (126 aa).

The protein belongs to the GpW/Gp25 family. IraD subfamily. In terms of assembly, interacts with RssB.

It localises to the cytoplasm. In terms of biological role, inhibits RpoS proteolysis by regulating RssB activity, thereby increasing the stability of the sigma stress factor RpoS during oxidative stress. Its effect on RpoS stability is due to its interaction with RssB, which probably blocks the interaction of RssB with RpoS, and the consequent delivery of the RssB-RpoS complex to the ClpXP protein degradation pathway. The chain is Anti-adapter protein IraD from Salmonella paratyphi A (strain ATCC 9150 / SARB42).